The primary structure comprises 243 residues: DNA repair protein RecO (243 aa).

It belongs to the RecO family.

Involved in DNA repair and RecF pathway recombination. This Vibrio parahaemolyticus serotype O3:K6 (strain RIMD 2210633) protein is DNA repair protein RecO.